The sequence spans 304 residues: MLDRIKIALQHLLPKVWLTQLAGWGADRQAGMLTKLVIDLFARIYKVNMQEAQQPDTASYRSFNDFFVRPLKPGIRPVDPLPNRLVFPADGAISQLGAIDDDRILQAKQHDYTLEALLAGNYIISDLFRDGLFVTTYLSPRDYHRVHMPCDGILRDMIYVPGDLFSVNPLTAANVPNLFARNERVICLFDTPFGPMVQILVGATIVGSIETVWAGVVTPPREGIIKRWAYPMEGEGAVILEKGDEMGRFKLGSTVINLFAKDRVQLMPGLASQSVTRMGEAMAEALDEDILARMSANDDTDTTP.

Catalysis depends on charge relay system; for autoendoproteolytic cleavage activity residues D90, H147, and S253. The active-site Schiff-base intermediate with substrate; via pyruvic acid; for decarboxylase activity is S253. Residue S253 is modified to Pyruvic acid (Ser); by autocatalysis.

It belongs to the phosphatidylserine decarboxylase family. PSD-B subfamily. Prokaryotic type I sub-subfamily. In terms of assembly, heterodimer of a large membrane-associated beta subunit and a small pyruvoyl-containing alpha subunit. Pyruvate is required as a cofactor. Post-translationally, is synthesized initially as an inactive proenzyme. Formation of the active enzyme involves a self-maturation process in which the active site pyruvoyl group is generated from an internal serine residue via an autocatalytic post-translational modification. Two non-identical subunits are generated from the proenzyme in this reaction, and the pyruvate is formed at the N-terminus of the alpha chain, which is derived from the carboxyl end of the proenzyme. The autoendoproteolytic cleavage occurs by a canonical serine protease mechanism, in which the side chain hydroxyl group of the serine supplies its oxygen atom to form the C-terminus of the beta chain, while the remainder of the serine residue undergoes an oxidative deamination to produce ammonia and the pyruvoyl prosthetic group on the alpha chain. During this reaction, the Ser that is part of the protease active site of the proenzyme becomes the pyruvoyl prosthetic group, which constitutes an essential element of the active site of the mature decarboxylase.

It localises to the cell membrane. The catalysed reaction is a 1,2-diacyl-sn-glycero-3-phospho-L-serine + H(+) = a 1,2-diacyl-sn-glycero-3-phosphoethanolamine + CO2. It functions in the pathway phospholipid metabolism; phosphatidylethanolamine biosynthesis; phosphatidylethanolamine from CDP-diacylglycerol: step 2/2. Functionally, catalyzes the formation of phosphatidylethanolamine (PtdEtn) from phosphatidylserine (PtdSer). The protein is Phosphatidylserine decarboxylase proenzyme of Dickeya dadantii (strain 3937) (Erwinia chrysanthemi (strain 3937)).